The primary structure comprises 352 residues: Speedy protein E18 (352 aa).

The span at 1 to 12 (MDRTKTRFRKRG) shows a compositional bias: basic residues. Residues 1–90 (MDRTKTRFRK…EPEKELAPEP (90 aa)) form a disordered region. Over residues 16–39 (GKITTSRQPHPQNEQSLQRSTSGY) the composition is skewed to polar residues. The span at 76 to 90 (DESEEEPEKELAPEP) shows a compositional bias: acidic residues.

This sequence belongs to the Speedy/Ringo family.

The protein is Speedy protein E18 of Homo sapiens (Human).